A 511-amino-acid chain; its full sequence is 2-isopropylmalate synthase (511 aa).

Residues 1-16 show a composition bias toward basic and acidic residues; sequence MTRKIDIFDTTLRDGE. The tract at residues 1–23 is disordered; the sequence is MTRKIDIFDTTLRDGEQSPGASM. The Pyruvate carboxyltransferase domain maps to 5–268; it reads IDIFDTTLRD…HTDVVTQELT (264 aa). Mn(2+)-binding residues include Asp14, His203, His205, and Asn239. A regulatory domain region spans residues 392-511; sequence ALESVQVVCG…IQTTRSKQGK (120 aa).

The protein belongs to the alpha-IPM synthase/homocitrate synthase family. LeuA type 1 subfamily. Homodimer. Requires Mn(2+) as cofactor.

The protein resides in the cytoplasm. The catalysed reaction is 3-methyl-2-oxobutanoate + acetyl-CoA + H2O = (2S)-2-isopropylmalate + CoA + H(+). The protein operates within amino-acid biosynthesis; L-leucine biosynthesis; L-leucine from 3-methyl-2-oxobutanoate: step 1/4. Functionally, catalyzes the condensation of the acetyl group of acetyl-CoA with 3-methyl-2-oxobutanoate (2-ketoisovalerate) to form 3-carboxy-3-hydroxy-4-methylpentanoate (2-isopropylmalate). The polypeptide is 2-isopropylmalate synthase (Olsenella uli (strain ATCC 49627 / DSM 7084 / CCUG 31166 / CIP 109912 / JCM 12494 / LMG 11480 / NCIMB 702895 / VPI D76D-27C) (Lactobacillus uli)).